A 503-amino-acid chain; its full sequence is Probable cytosol aminopeptidase (503 aa).

The Mn(2+) site is built by K270 and D275. Residue K282 is part of the active site. Mn(2+) contacts are provided by D293, D352, and E354. The active site involves R356.

This sequence belongs to the peptidase M17 family. Mn(2+) is required as a cofactor.

Its subcellular location is the cytoplasm. It catalyses the reaction Release of an N-terminal amino acid, Xaa-|-Yaa-, in which Xaa is preferably Leu, but may be other amino acids including Pro although not Arg or Lys, and Yaa may be Pro. Amino acid amides and methyl esters are also readily hydrolyzed, but rates on arylamides are exceedingly low.. The enzyme catalyses Release of an N-terminal amino acid, preferentially leucine, but not glutamic or aspartic acids.. Presumably involved in the processing and regular turnover of intracellular proteins. Catalyzes the removal of unsubstituted N-terminal amino acids from various peptides. The sequence is that of Probable cytosol aminopeptidase from Erwinia tasmaniensis (strain DSM 17950 / CFBP 7177 / CIP 109463 / NCPPB 4357 / Et1/99).